Here is a 74-residue protein sequence, read N- to C-terminus: Delta-stichotoxin-Sgt2a (74 aa).

The first 19 residues, 1-19 (MNRLIILVFAAVFLTLASA), serve as a signal peptide directing secretion. Residues 20–28 (EVSEDVNMA) constitute a propeptide that is removed on maturation. 3 disulfide bridges follow: Cys34–Cys71, Cys36–Cys64, and Cys57–Cys72.

It belongs to the sea anemone sodium channel inhibitory toxin family. Type I subfamily.

The protein resides in the secreted. Its subcellular location is the nematocyst. Binds specifically to voltage-gated sodium channels (Nav), thereby delaying their inactivation during signal transduction. In Stichodactyla gigantea (Giant carpet anemone), this protein is Delta-stichotoxin-Sgt2a.